The following is a 125-amino-acid chain: Multifunctional methyltransferase subunit TRM112-like protein (125 aa).

The TRM112 domain maps to 2 to 119 (KLLTHNLLSS…SRGIPNMLLS (118 aa)). A phosphoserine mark is found at Ser-119 and Ser-125.

The protein belongs to the TRM112 family. As to quaternary structure, part of the heterodimeric BUD23-TRM112 methyltransferase complex; this heterodimerization is necessary for the metabolic stability and activity of the catalytic subunit BUD23. Part of the heterodimeric N6AMT1-TRM112 methyltransferase complex; this heterodimerization is necessary for S-adenosyl-L-methionine-binding to N6AMT1/HEMK2. Part of the heterodimeric ALKBH8-TRM112 methyltransferase complex. Part of the heterodimeric METTL5-TRM112 methyltransferase complex; this heterodimerization is necessary for the stability of the catalytic subunit METTL5. Part of the heterodimeric THUMPD3-TRM112 methyltransferase complex; this complex forms an active tRNA methyltransferase, where TRMT112 acts as an activator of the catalytic subunit THUMPD3. Part of the heterodimeric THUMPD2-TRM112 methyltransferase complex; this complex forms an active tRNA methyltransferase, where TRMT112 acts as an activator of the catalytic subunit THUMPD2. Part of the heterodimeric TRMT11-TRM112 methyltransferase complex; this complex forms an active tRNA methyltransferase, where TRMT112 acts as an activator of the catalytic subunit TRMT11.

It is found in the nucleus. It localises to the nucleoplasm. Its subcellular location is the cytoplasm. The protein resides in the perinuclear region. Its function is as follows. Acts as an activator of both rRNA/tRNA and protein methyltransferases. Together with methyltransferase BUD23, methylates the N(7) position of a guanine in 18S rRNA. The heterodimer with N6AMT1/HEMK2 catalyzes N5-methylation of ETF1 on 'Gln-185', using S-adenosyl L-methionine as methyl donor. The heterodimer with N6AMT1/HEMK2 also monomethylates 'Lys-12' of histone H4 (H4K12me1). The heterodimer with ALKBH8 catalyzes the methylation of 5-carboxymethyl uridine to 5-methylcarboxymethyl uridine at the wobble position of the anticodon loop in target tRNA species. Together with methyltransferase THUMPD3, catalyzes the formation of N(2)-methylguanosine at position 6 in a broad range of tRNA substrates and at position 7 of tRNA(Trp). Involved in the pre-rRNA processing steps leading to small-subunit rRNA production. Together with methyltransferase METTL5, specifically methylates the 6th position of adenine in position 1832 of 18S rRNA. This chain is Multifunctional methyltransferase subunit TRM112-like protein, found in Homo sapiens (Human).